Reading from the N-terminus, the 117-residue chain is Small ribosomal subunit protein bS6 (117 aa).

The tract at residues 96-117 (HAEGPSVQMQKRDERDSRRERR) is disordered. The segment covering 105–117 (QKRDERDSRRERR) has biased composition (basic and acidic residues).

This sequence belongs to the bacterial ribosomal protein bS6 family.

Its function is as follows. Binds together with bS18 to 16S ribosomal RNA. This Ruegeria pomeroyi (strain ATCC 700808 / DSM 15171 / DSS-3) (Silicibacter pomeroyi) protein is Small ribosomal subunit protein bS6.